The chain runs to 2464 residues: Highly reducing polyketide synthase xilA (2464 aa).

One can recognise a Ketosynthase family 3 (KS3) domain in the interval 9 to 437 (HDPIALVGIG…GTNGHCIIDH (429 aa)). Active-site for beta-ketoacyl synthase activity residues include C182, H318, and H360. The segment covering 461–487 (QNGINGTNGTNGTNGTNGTNGTNGTNG) has biased composition (low complexity). Positions 461–495 (QNGINGTNGTNGTNGTNGTNGTNGTNGHHNPKTEA) are disordered. The Malonyl-CoA:ACP transacylase (MAT) domain maps to 589-911 (FIFTGQGAQW…LKRNEDAQRL (323 aa)). The tract at residues 983–1121 (HDLLGSKVPG…GQIKIEVSTF (139 aa)) is N-terminal hotdog fold. A PKS/mFAS DH domain is found at 983–1286 (HDLLGSKVPG…FTSLNNEQES (304 aa)). The active-site Proton acceptor; for dehydratase activity is H1015. The segment at 1133–1286 (GRLVDAQTWY…FTSLNNEQES (154 aa)) is C-terminal hotdog fold. The active-site Proton donor; for dehydratase activity is D1199. A methyltransferase (CMeT) domain region spans residues 1282-1490 (NEQESTSTGD…TEPAHHSTIT (209 aa)). The Enoyl reductase (ER) domain maps to 1716 to 2028 (GILTSLYFKP…KGTHIGKMVI (313 aa)). The Ketoreductase (KR) domain occupies 2052–2231 (ANYILVGGMS…ATTVSLGFIN (180 aa)). In terms of domain architecture, Carrier spans 2383-2461 (ETVTFVTDAI…SIAQVIVEEA (79 aa)). S2420 carries the O-(pantetheine 4'-phosphoryl)serine modification.

The cofactor is pantetheine 4'-phosphate.

It participates in secondary metabolite biosynthesis. Highly reducing polyketide synthase; part of the gene cluster that mediates the biosynthesis of the 6-methyl-2-pyrone derivative xylariolide D. XilA produces the 5-alkyl-6-methyl-2-pyrone backbone called prexylariolide D via sequential condensations of 4 malonyl-CoA units with one acetyl-CoA starter unit. During the biosynthesis, the linear polyketide chain is branched by the addition of an acetyl unit as the origin of the methyl group at the 2-pyrone ring. Prexylariolide D is then hydroxylated at the side chain by xilC to form the final product, xylariolide D. In Penicillium rubens (strain ATCC 28089 / DSM 1075 / NRRL 1951 / Wisconsin 54-1255) (Penicillium chrysogenum), this protein is Highly reducing polyketide synthase xilA.